We begin with the raw amino-acid sequence, 150 residues long: UPF0208 membrane protein VV1_2222 (150 aa).

2 helical membrane passes run 42–62 (FGIK…MAFN) and 70–90 (AIVM…WLGH).

The protein belongs to the UPF0208 family.

It localises to the cell inner membrane. In Vibrio vulnificus (strain CMCP6), this protein is UPF0208 membrane protein VV1_2222.